A 425-amino-acid chain; its full sequence is Serine--tRNA ligase (425 aa).

230-232 (TAE) provides a ligand contact to L-serine. An ATP-binding site is contributed by 261 to 263 (RSE). L-serine is bound at residue Glu-284. Residue 348–351 (EISS) coordinates ATP. L-serine is bound at residue Ser-384.

The protein belongs to the class-II aminoacyl-tRNA synthetase family. Type-1 seryl-tRNA synthetase subfamily. As to quaternary structure, homodimer. The tRNA molecule binds across the dimer.

It localises to the cytoplasm. It carries out the reaction tRNA(Ser) + L-serine + ATP = L-seryl-tRNA(Ser) + AMP + diphosphate + H(+). The enzyme catalyses tRNA(Sec) + L-serine + ATP = L-seryl-tRNA(Sec) + AMP + diphosphate + H(+). Its pathway is aminoacyl-tRNA biosynthesis; selenocysteinyl-tRNA(Sec) biosynthesis; L-seryl-tRNA(Sec) from L-serine and tRNA(Sec): step 1/1. Functionally, catalyzes the attachment of serine to tRNA(Ser). Is also able to aminoacylate tRNA(Sec) with serine, to form the misacylated tRNA L-seryl-tRNA(Sec), which will be further converted into selenocysteinyl-tRNA(Sec). The chain is Serine--tRNA ligase from Streptococcus equi subsp. zooepidemicus (strain H70).